A 500-amino-acid polypeptide reads, in one-letter code: L-arabinose isomerase (500 aa).

Residues glutamate 306, glutamate 333, histidine 350, and histidine 450 each coordinate Mn(2+).

Belongs to the arabinose isomerase family. In terms of assembly, homohexamer. Requires Mn(2+) as cofactor.

It carries out the reaction beta-L-arabinopyranose = L-ribulose. The protein operates within carbohydrate degradation; L-arabinose degradation via L-ribulose; D-xylulose 5-phosphate from L-arabinose (bacterial route): step 1/3. Its function is as follows. Catalyzes the conversion of L-arabinose to L-ribulose. The polypeptide is L-arabinose isomerase (Salmonella paratyphi A (strain ATCC 9150 / SARB42)).